Consider the following 205-residue polypeptide: Molybdenum cofactor guanylyltransferase (205 aa).

GTP is bound by residues 14–16 (LAG), K27, D77, and D107. D107 contributes to the Mg(2+) binding site.

This sequence belongs to the MobA family. As to quaternary structure, monomer. Mg(2+) is required as a cofactor.

It localises to the cytoplasm. The enzyme catalyses Mo-molybdopterin + GTP + H(+) = Mo-molybdopterin guanine dinucleotide + diphosphate. In terms of biological role, transfers a GMP moiety from GTP to Mo-molybdopterin (Mo-MPT) cofactor (Moco or molybdenum cofactor) to form Mo-molybdopterin guanine dinucleotide (Mo-MGD) cofactor. The polypeptide is Molybdenum cofactor guanylyltransferase (Burkholderia lata (strain ATCC 17760 / DSM 23089 / LMG 22485 / NCIMB 9086 / R18194 / 383)).